The following is a 369-amino-acid chain: Peptide chain release factor 1 (369 aa).

Glutamine 234 carries the N5-methylglutamine modification.

The protein belongs to the prokaryotic/mitochondrial release factor family. Methylated by PrmC. Methylation increases the termination efficiency of RF1.

The protein resides in the cytoplasm. In terms of biological role, peptide chain release factor 1 directs the termination of translation in response to the peptide chain termination codons UAG and UAA. This Kocuria rhizophila (strain ATCC 9341 / DSM 348 / NBRC 103217 / DC2201) protein is Peptide chain release factor 1.